Consider the following 234-residue polypeptide: Glucosamine-6-phosphate deaminase (234 aa).

Residue Asp-63 is the Proton acceptor; for enolization step of the active site. The For ring-opening step role is filled by Asn-129. The active-site Proton acceptor; for ring-opening step is His-131. The active-site For ring-opening step is Glu-136.

Belongs to the glucosamine/galactosamine-6-phosphate isomerase family. NagB subfamily.

It catalyses the reaction alpha-D-glucosamine 6-phosphate + H2O = beta-D-fructose 6-phosphate + NH4(+). It functions in the pathway amino-sugar metabolism; N-acetylneuraminate degradation; D-fructose 6-phosphate from N-acetylneuraminate: step 5/5. Catalyzes the reversible isomerization-deamination of glucosamine 6-phosphate (GlcN6P) to form fructose 6-phosphate (Fru6P) and ammonium ion. The polypeptide is Glucosamine-6-phosphate deaminase (Listeria monocytogenes serovar 1/2a (strain ATCC BAA-679 / EGD-e)).